The chain runs to 195 residues: Peptidyl-tRNA hydrolase (195 aa).

Tyrosine 17 serves as a coordination point for tRNA. Histidine 22 serves as the catalytic Proton acceptor. TRNA contacts are provided by tyrosine 68, asparagine 70, and asparagine 116.

It belongs to the PTH family. Monomer.

It is found in the cytoplasm. It carries out the reaction an N-acyl-L-alpha-aminoacyl-tRNA + H2O = an N-acyl-L-amino acid + a tRNA + H(+). Its function is as follows. Hydrolyzes ribosome-free peptidyl-tRNAs (with 1 or more amino acids incorporated), which drop off the ribosome during protein synthesis, or as a result of ribosome stalling. Catalyzes the release of premature peptidyl moieties from peptidyl-tRNA molecules trapped in stalled 50S ribosomal subunits, and thus maintains levels of free tRNAs and 50S ribosomes. The sequence is that of Peptidyl-tRNA hydrolase from Shewanella putrefaciens (strain CN-32 / ATCC BAA-453).